A 283-amino-acid polypeptide reads, in one-letter code: Pyridoxal kinase PdxY (283 aa).

S8 provides a ligand contact to substrate. Positions 110 and 147 each coordinate ATP. Residue D219 coordinates substrate.

This sequence belongs to the pyridoxine kinase family. PdxY subfamily. As to quaternary structure, homodimer. Mg(2+) serves as cofactor.

It carries out the reaction pyridoxal + ATP = pyridoxal 5'-phosphate + ADP + H(+). The protein operates within cofactor metabolism; pyridoxal 5'-phosphate salvage; pyridoxal 5'-phosphate from pyridoxal: step 1/1. In terms of biological role, pyridoxal kinase involved in the salvage pathway of pyridoxal 5'-phosphate (PLP). Catalyzes the phosphorylation of pyridoxal to PLP. The sequence is that of Pyridoxal kinase PdxY from Leifsonia xyli subsp. xyli (strain CTCB07).